Consider the following 359-residue polypeptide: Probable dual-specificity RNA methyltransferase RlmN (359 aa).

Glutamate 91 serves as the catalytic Proton acceptor. In terms of domain architecture, Radical SAM core spans 97-329 (QHYGHSVCVT…KKNGVNCVVR (233 aa)). Cysteine 104 and cysteine 340 are joined by a disulfide. 3 residues coordinate [4Fe-4S] cluster: cysteine 111, cysteine 115, and cysteine 118. S-adenosyl-L-methionine-binding positions include 163 to 164 (GE), serine 195, 218 to 220 (SLH), and asparagine 296. The active-site S-methylcysteine intermediate is cysteine 340.

This sequence belongs to the radical SAM superfamily. RlmN family. It depends on [4Fe-4S] cluster as a cofactor.

Its subcellular location is the cytoplasm. It carries out the reaction adenosine(2503) in 23S rRNA + 2 reduced [2Fe-2S]-[ferredoxin] + 2 S-adenosyl-L-methionine = 2-methyladenosine(2503) in 23S rRNA + 5'-deoxyadenosine + L-methionine + 2 oxidized [2Fe-2S]-[ferredoxin] + S-adenosyl-L-homocysteine. It catalyses the reaction adenosine(37) in tRNA + 2 reduced [2Fe-2S]-[ferredoxin] + 2 S-adenosyl-L-methionine = 2-methyladenosine(37) in tRNA + 5'-deoxyadenosine + L-methionine + 2 oxidized [2Fe-2S]-[ferredoxin] + S-adenosyl-L-homocysteine. Functionally, specifically methylates position 2 of adenine 2503 in 23S rRNA and position 2 of adenine 37 in tRNAs. This Streptococcus pyogenes serotype M2 (strain MGAS10270) protein is Probable dual-specificity RNA methyltransferase RlmN.